The primary structure comprises 233 residues: Archaetidylserine synthase (233 aa).

8 consecutive transmembrane segments (helical) span residues 7–27 (ITSFIALPDLLSMLNASSGYL), 29–49 (ILLSIDGSLNAACILMLLAVL), 75–95 (SLSDVISFGVAPAILIYSAAV), 102–122 (ILVGPLIVLCGILRLSRFNVL), 126–146 (GKNFTGLPIPVAAVTISSFYL), 147–167 (TGFYSELSAAFIMIAVSVLMI), 180–200 (ASTALILIIATIISVAAVEIL), and 206–226 (VAGPVAIILFIATLTYIAVPI).

The protein belongs to the CDP-alcohol phosphatidyltransferase class-I family.

It localises to the membrane. The catalysed reaction is CDP-2,3-bis-O-(geranylgeranyl)-sn-glycerol + L-serine = archaetidylserine + CMP + H(+). It catalyses the reaction CDP-2,3-bis-O-(phytanyl)-sn-glycerol + L-serine = 2,3-bis-O-phytanyl-sn-glycero-3-phospho-L-serine + CMP + H(+). It participates in membrane lipid metabolism; glycerophospholipid metabolism. Activated by Mn(2+) ions. Functionally, involved in the lipid biosynthesis. Catalyzes the formation of unsaturated archaetidylserine from CDP-unsaturated archaeol and L-serine. Activity with ester-linked substrate analogs containing straight aliphatic chains (typical bacterial substrates) is two to three times higher than that with the corresponding ether-type substrate (typical archaeal substrates). Both enantiomers of CDP-unsaturated archaeols with ether-linked geranylgeranyl chains and CDP-saturated archaeol with ether-linked phytanyl chains are similarly active. The enzyme also accepts D-serine, although activity is only about third of that with L-serine. The protein is Archaetidylserine synthase of Methanothermobacter thermautotrophicus (strain ATCC 29096 / DSM 1053 / JCM 10044 / NBRC 100330 / Delta H) (Methanobacterium thermoautotrophicum).